Consider the following 76-residue polypeptide: Acyl carrier protein (76 aa).

The region spanning 1–76 (MSVEEKVKKI…DAIDYVSNKQ (76 aa)) is the Carrier domain. Ser-36 carries the O-(pantetheine 4'-phosphoryl)serine modification.

This sequence belongs to the acyl carrier protein (ACP) family. 4'-phosphopantetheine is transferred from CoA to a specific serine of apo-ACP by AcpS. This modification is essential for activity because fatty acids are bound in thioester linkage to the sulfhydryl of the prosthetic group.

It localises to the cytoplasm. It participates in lipid metabolism; fatty acid biosynthesis. In terms of biological role, carrier of the growing fatty acid chain in fatty acid biosynthesis. The sequence is that of Acyl carrier protein from Nitratidesulfovibrio vulgaris (strain ATCC 29579 / DSM 644 / CCUG 34227 / NCIMB 8303 / VKM B-1760 / Hildenborough) (Desulfovibrio vulgaris).